A 219-amino-acid polypeptide reads, in one-letter code: Phosphatidylserine decarboxylase proenzyme (219 aa).

Catalysis depends on serine 188, which acts as the Schiff-base intermediate with substrate; via pyruvic acid. Pyruvic acid (Ser); by autocatalysis is present on serine 188.

The protein belongs to the phosphatidylserine decarboxylase family. PSD-A subfamily. In terms of assembly, heterodimer of a large membrane-associated beta subunit and a small pyruvoyl-containing alpha subunit. Requires pyruvate as cofactor. Is synthesized initially as an inactive proenzyme. Formation of the active enzyme involves a self-maturation process in which the active site pyruvoyl group is generated from an internal serine residue via an autocatalytic post-translational modification. Two non-identical subunits are generated from the proenzyme in this reaction, and the pyruvate is formed at the N-terminus of the alpha chain, which is derived from the carboxyl end of the proenzyme. The post-translation cleavage follows an unusual pathway, termed non-hydrolytic serinolysis, in which the side chain hydroxyl group of the serine supplies its oxygen atom to form the C-terminus of the beta chain, while the remainder of the serine residue undergoes an oxidative deamination to produce ammonia and the pyruvoyl prosthetic group on the alpha chain.

The protein resides in the cell membrane. The enzyme catalyses a 1,2-diacyl-sn-glycero-3-phospho-L-serine + H(+) = a 1,2-diacyl-sn-glycero-3-phosphoethanolamine + CO2. It functions in the pathway phospholipid metabolism; phosphatidylethanolamine biosynthesis; phosphatidylethanolamine from CDP-diacylglycerol: step 2/2. Functionally, catalyzes the formation of phosphatidylethanolamine (PtdEtn) from phosphatidylserine (PtdSer). This Ruegeria pomeroyi (strain ATCC 700808 / DSM 15171 / DSS-3) (Silicibacter pomeroyi) protein is Phosphatidylserine decarboxylase proenzyme.